We begin with the raw amino-acid sequence, 352 residues long: Thymidine kinase (352 aa).

32–39 (GVYGIGKS) contributes to the ATP binding site. The Proton acceptor role is filled by E60. Substrate contacts are provided by Y78 and Q102. R192 provides a ligand contact to ATP. R198 is a substrate binding site.

Belongs to the herpesviridae thymidine kinase family. As to quaternary structure, homodimer.

The catalysed reaction is thymidine + ATP = dTMP + ADP + H(+). Catalyzes the transfer of the gamma-phospho group of ATP to thymidine to generate dTMP in the salvage pathway of pyrimidine synthesis. The dTMP serves as a substrate for DNA polymerase during viral DNA replication. Allows the virus to be reactivated and to grow in non-proliferative cells lacking a high concentration of phosphorylated nucleic acid precursors. This is Thymidine kinase from Equus caballus (Horse).